The sequence spans 333 residues: Biotin synthase (333 aa).

The Radical SAM core domain maps to 51–278 (RAIQLSTLMS…KSYVRLSAGR (228 aa)). [4Fe-4S] cluster-binding residues include Cys-66, Cys-70, and Cys-73. [2Fe-2S] cluster contacts are provided by Cys-110, Cys-141, Cys-201, and Arg-273.

Belongs to the radical SAM superfamily. Biotin synthase family. As to quaternary structure, homodimer. The cofactor is [4Fe-4S] cluster. [2Fe-2S] cluster serves as cofactor.

The enzyme catalyses (4R,5S)-dethiobiotin + (sulfur carrier)-SH + 2 reduced [2Fe-2S]-[ferredoxin] + 2 S-adenosyl-L-methionine = (sulfur carrier)-H + biotin + 2 5'-deoxyadenosine + 2 L-methionine + 2 oxidized [2Fe-2S]-[ferredoxin]. Its pathway is cofactor biosynthesis; biotin biosynthesis; biotin from 7,8-diaminononanoate: step 2/2. Its function is as follows. Catalyzes the conversion of dethiobiotin (DTB) to biotin by the insertion of a sulfur atom into dethiobiotin via a radical-based mechanism. This chain is Biotin synthase, found in Haemophilus influenzae (strain 86-028NP).